Consider the following 510-residue polypeptide: MRSLRFISAEALVSHSQLVQENLDNIAYNLYPLLFKASYLLEQADVTRALLSHWPLEEFRLAVLLRPNTDHPEDLRDRACKACLEACMQGIADHVLKSGSNRLRVADFTGIQDVQVQQCPCGRALGRWGRTKVLARTCCQLQGQPCSAGHPIEVFADLFVTEGNFDMVVQALKPLGPAPLQVCCPSLRADSLSPGQLLQVLGLAGPGNLRKLEVVHNVRLHAGHVQQLLTQVGFPQLTSLTLPTKAFDAPPTCAPDPEGEDLLLTSIAWELSQMNQLTELSVAFSTLTGKIQTLLSPLKTPLRVLDLANCALNHEDISFLADCNHTAHLEVLDLSGHNLVHLYPSTFFRLLSQAAQTLRVLTLEECNITDSHVNMMILGLSPCSQLQQFKFLGNPLSGSALRRLFAALCELPRLRHIEFPVPKDCYPEGAIYPQDELSVSKFDQQKYDVIAEDLRAVLLRANREDIQVSTPLFGSFDPDIHETSNELGTFLLQAFKTALENFSRALEQME.

An LRR 1; degenerate repeat occupies 100 to 137 (SNRLRVADFTGIQDVQVQQCPCGRALGRWGRTKVLART). One copy of the LRR 2; degenerate repeat lies at 181 to 205 (QVCCPSLRADSLSPGQLLQVLGLAG). Residues 234–273 (FPQLTSLTLPTKAFDAPPTCAPDPEGEDLLLTSIAWELSQ) form an LRR 4; degenerate repeat. LRR repeat units follow at residues 274–298 (MNQL…LSPL), 299–330 (KTPL…AHLE), 331–349 (VLDL…TFFR), 355–382 (AQTL…GLSP), and 383–407 (CSQL…LFAA).

This sequence belongs to the PRAME family. LRRC14 subfamily.

This Mus musculus (Mouse) protein is Leucine-rich repeat-containing protein 14B.